The sequence spans 366 residues: MNLAAMDPQTYDAQLEHKRIKLEQAFAQFETPSVEVFASEPANYRMRAEFRMWHDGDDLYYYMFDKVLNEKVRCDQYLPASVLINQMMSALIAELKPNPSLRHKLFQVDFLSTLSGEILVSLLYHRQLDDQWRTNAAALKAKLSSQFNVNIIGRARKQKIDLDKDFVVESLQVNDKTFLYKQIENSFTQPNAKVAVKMLEWAIDVTQDSQGDLLELYCGNGNFSIALAQNFNRVLATELAKPSVEAAQYNIEANGIKNLQIIRMSAEDFSDAMAKKRSFRRLEGIDLDSYVCNTIFVDPPRAGIDPDTLALVQGYERILYISCNPDTLKDNLEQLYKTHRVTQFALFDQFPYTDHMETGVLLERTQ.

5 residues coordinate S-adenosyl-L-methionine: Gln-189, Tyr-217, Asn-222, Glu-238, and Asp-298. The active-site Nucleophile is the Cys-323. The active-site Proton acceptor is the Glu-357.

Belongs to the class I-like SAM-binding methyltransferase superfamily. RNA M5U methyltransferase family. TrmA subfamily.

The enzyme catalyses uridine(54) in tRNA + S-adenosyl-L-methionine = 5-methyluridine(54) in tRNA + S-adenosyl-L-homocysteine + H(+). It carries out the reaction uridine(341) in tmRNA + S-adenosyl-L-methionine = 5-methyluridine(341) in tmRNA + S-adenosyl-L-homocysteine + H(+). Its function is as follows. Dual-specificity methyltransferase that catalyzes the formation of 5-methyluridine at position 54 (m5U54) in all tRNAs, and that of position 341 (m5U341) in tmRNA (transfer-mRNA). The chain is tRNA/tmRNA (uracil-C(5))-methyltransferase from Shewanella putrefaciens (strain CN-32 / ATCC BAA-453).